We begin with the raw amino-acid sequence, 364 residues long: Putative [LysW]-aminoadipate semialdehyde/glutamate semialdehyde transaminase (364 aa).

Pyridoxal 5'-phosphate is bound by residues 90 to 91 (GT) and F117. Substrate is bound at residue R120. Residue 202 to 205 (DEVQ) coordinates pyridoxal 5'-phosphate. N6-(pyridoxal phosphate)lysine is present on K230. Substrate is bound at residue S254. T255 is a binding site for pyridoxal 5'-phosphate.

The protein belongs to the class-III pyridoxal-phosphate-dependent aminotransferase family. LysJ subfamily. Homodimer. It depends on pyridoxal 5'-phosphate as a cofactor.

It is found in the cytoplasm. The catalysed reaction is [amino-group carrier protein]-C-terminal-gamma-(L-lysyl)-L-glutamate + 2-oxoglutarate = [amino-group carrier protein]-C-terminal-N-(1-carboxy-5-oxopentan-1-yl)-L-glutamine + L-glutamate. It carries out the reaction [amino-group carrier protein]-C-terminal-gamma-(L-ornithyl)-L-glutamate + 2-oxoglutarate = [amino-group carrier protein]-C-terminal-gamma-(L-glutamyl-5-semialdehyde)-L-glutamate + L-glutamate. It functions in the pathway amino-acid biosynthesis; L-lysine biosynthesis via AAA pathway; L-lysine from L-alpha-aminoadipate (Thermus route): step 4/5. It participates in amino-acid biosynthesis; L-arginine biosynthesis. In terms of biological role, involved in both the arginine and lysine biosynthetic pathways. The polypeptide is Putative [LysW]-aminoadipate semialdehyde/glutamate semialdehyde transaminase (Pyrococcus abyssi (strain GE5 / Orsay)).